Here is a 244-residue protein sequence, read N- to C-terminus: Ribosomal RNA small subunit methyltransferase G (244 aa).

S-adenosyl-L-methionine contacts are provided by residues Gly-84, Phe-89, 107–109 (DST), 135–136 (AE), and Arg-154.

Belongs to the methyltransferase superfamily. RNA methyltransferase RsmG family.

The protein localises to the cytoplasm. In terms of biological role, specifically methylates the N7 position of a guanine in 16S rRNA. The protein is Ribosomal RNA small subunit methyltransferase G of Nostoc punctiforme (strain ATCC 29133 / PCC 73102).